A 313-amino-acid polypeptide reads, in one-letter code: D-alanine--D-alanine ligase (313 aa).

An ATP-grasp domain is found at 114-309 (KWLWKGVGLP…FSKLVLKLIS (196 aa)). 142 to 195 (DLTFPVIVKPSHEGSSIGMRKVDTLDALQEAVDFAQQYDSEILIEQWITGREFT) provides a ligand contact to ATP. Asp263, Glu276, and Asn278 together coordinate Mg(2+).

The protein belongs to the D-alanine--D-alanine ligase family. Mg(2+) serves as cofactor. The cofactor is Mn(2+).

The protein resides in the cytoplasm. The catalysed reaction is 2 D-alanine + ATP = D-alanyl-D-alanine + ADP + phosphate + H(+). The protein operates within cell wall biogenesis; peptidoglycan biosynthesis. Its function is as follows. Cell wall formation. This is D-alanine--D-alanine ligase from Hydrogenovibrio crunogenus (strain DSM 25203 / XCL-2) (Thiomicrospira crunogena).